Reading from the N-terminus, the 491-residue chain is UDP-N-acetylmuramate--L-alanine ligase (491 aa).

ATP is bound at residue 126–132 (GTHGKTT).

It belongs to the MurCDEF family.

The protein resides in the cytoplasm. The enzyme catalyses UDP-N-acetyl-alpha-D-muramate + L-alanine + ATP = UDP-N-acetyl-alpha-D-muramoyl-L-alanine + ADP + phosphate + H(+). The protein operates within cell wall biogenesis; peptidoglycan biosynthesis. Cell wall formation. This chain is UDP-N-acetylmuramate--L-alanine ligase, found in Shigella boydii serotype 18 (strain CDC 3083-94 / BS512).